The chain runs to 102 residues: Small ribosomal subunit protein bS6 (102 aa).

It belongs to the bacterial ribosomal protein bS6 family.

In terms of biological role, binds together with bS18 to 16S ribosomal RNA. The polypeptide is Small ribosomal subunit protein bS6 (rpsF) (Deinococcus radiodurans (strain ATCC 13939 / DSM 20539 / JCM 16871 / CCUG 27074 / LMG 4051 / NBRC 15346 / NCIMB 9279 / VKM B-1422 / R1)).